The primary structure comprises 540 residues: Eukaryotic translation initiation factor 3 subunit L (540 aa).

Residues 307–515 form the PCI domain; it reads TFSDILLYIQ…IHIADTKVSH (209 aa).

It belongs to the eIF-3 subunit L family. Component of the eukaryotic translation initiation factor 3 (eIF-3) complex. The eIF-3 complex interacts with pix.

It localises to the cytoplasm. In terms of biological role, component of the eukaryotic translation initiation factor 3 (eIF-3) complex, which is involved in protein synthesis of a specialized repertoire of mRNAs and, together with other initiation factors, stimulates binding of mRNA and methionyl-tRNAi to the 40S ribosome. The eIF-3 complex specifically targets and initiates translation of a subset of mRNAs involved in cell proliferation. In Drosophila grimshawi (Hawaiian fruit fly), this protein is Eukaryotic translation initiation factor 3 subunit L.